A 123-amino-acid polypeptide reads, in one-letter code: Ribulose bisphosphate carboxylase small subunit, chloroplastic 1 (123 aa).

Met-1 bears the Methionine derivative mark.

The protein belongs to the RuBisCO small chain family. In terms of assembly, heterohexadecamer of 8 large and 8 small subunits.

The protein localises to the plastid. The protein resides in the chloroplast. RuBisCO catalyzes two reactions: the carboxylation of D-ribulose 1,5-bisphosphate, the primary event in carbon dioxide fixation, as well as the oxidative fragmentation of the pentose substrate. Both reactions occur simultaneously and in competition at the same active site. Although the small subunit is not catalytic it is essential for maximal activity. In Spinacia oleracea (Spinach), this protein is Ribulose bisphosphate carboxylase small subunit, chloroplastic 1.